Reading from the N-terminus, the 398-residue chain is 1-deoxy-D-xylulose 5-phosphate reductoisomerase (398 aa).

NADPH-binding residues include Thr-10, Gly-11, Ser-12, Ile-13, Gly-36, Arg-37, Asn-38, and Asn-124. Lys-125 serves as a coordination point for 1-deoxy-D-xylulose 5-phosphate. Glu-126 is a binding site for NADPH. Residue Asp-150 coordinates Mn(2+). 1-deoxy-D-xylulose 5-phosphate is bound by residues Ser-151, Glu-152, Ser-186, and His-209. Residue Glu-152 coordinates Mn(2+). Gly-215 contributes to the NADPH binding site. The 1-deoxy-D-xylulose 5-phosphate site is built by Ser-222, Asn-227, Lys-228, and Glu-231. Glu-231 contributes to the Mn(2+) binding site.

Belongs to the DXR family. As to quaternary structure, homodimer. Mg(2+) serves as cofactor. Mn(2+) is required as a cofactor.

The enzyme catalyses 2-C-methyl-D-erythritol 4-phosphate + NADP(+) = 1-deoxy-D-xylulose 5-phosphate + NADPH + H(+). Its pathway is isoprenoid biosynthesis; isopentenyl diphosphate biosynthesis via DXP pathway; isopentenyl diphosphate from 1-deoxy-D-xylulose 5-phosphate: step 1/6. Catalyzes the NADPH-dependent rearrangement and reduction of 1-deoxy-D-xylulose-5-phosphate (DXP) to 2-C-methyl-D-erythritol 4-phosphate (MEP). This chain is 1-deoxy-D-xylulose 5-phosphate reductoisomerase, found in Yersinia enterocolitica serotype O:8 / biotype 1B (strain NCTC 13174 / 8081).